We begin with the raw amino-acid sequence, 485 residues long: Amidophosphoribosyltransferase, chloroplastic (485 aa).

The N-terminal 18 residues, Lys1–Glu18, are a transit peptide targeting the chloroplast. The active-site Nucleophile is the Cys19. One can recognise a Glutamine amidotransferase type-2 domain in the interval Cys19–Thr237. Cys253 lines the [4Fe-4S] cluster pocket. The Mg(2+) site is built by Ser300, Asp362, and Asp363. The [4Fe-4S] cluster site is built by Cys399, Cys450, and Cys453.

This sequence in the C-terminal section; belongs to the purine/pyrimidine phosphoribosyltransferase family. The cofactor is Mg(2+). It depends on [4Fe-4S] cluster as a cofactor.

Its subcellular location is the plastid. The protein resides in the chloroplast. It carries out the reaction 5-phospho-beta-D-ribosylamine + L-glutamate + diphosphate = 5-phospho-alpha-D-ribose 1-diphosphate + L-glutamine + H2O. Its pathway is purine metabolism; IMP biosynthesis via de novo pathway; N(1)-(5-phospho-D-ribosyl)glycinamide from 5-phospho-alpha-D-ribose 1-diphosphate: step 1/2. The protein is Amidophosphoribosyltransferase, chloroplastic (PUR1) of Vigna aconitifolia (Moth bean).